We begin with the raw amino-acid sequence, 90 residues long: Bombyxin B-9 (90 aa).

The N-terminal stretch at 1–20 (MMKTAVMFILVVVISLTYSS) is a signal peptide. 3 disulfide bridges follow: C30-C75, C42-C88, and C74-C79. A propeptide spans 49–64 (GGAQYAPYWQETYLRS) (c peptide like).

This sequence belongs to the insulin family. Heterodimer of a B chain and an A chain linked by two disulfide bonds.

The protein resides in the secreted. Functionally, brain peptide responsible for activation of prothoracic glands to produce ecdysone in insects. The chain is Bombyxin B-9 (BBXB9) from Bombyx mori (Silk moth).